The following is a 1036-amino-acid chain: Protein CLEC16A (1036 aa).

Residues Ile-51–Tyr-198 enclose the FPL domain. Disordered regions lie at residues Ser-375–Lys-416, Gly-437–Asn-458, His-876–Leu-967, and Ser-1008–His-1036. The span at His-381 to Asn-392 shows a compositional bias: basic residues. Low complexity-rich tracts occupy residues Ser-877–Gly-891, Ser-898–Thr-923, and Asn-943–Ser-954.

It belongs to the CLEC16A/gop-1 family. In terms of assembly, interacts with RNF41/NRDP1. In terms of tissue distribution, ubiquitously expressed. Expressed in pancreatic islets.

The protein localises to the endosome membrane. The protein resides in the lysosome membrane. Functionally, regulator of mitophagy through the upstream regulation of the RNF41/NRDP1-PRKN pathway. Mitophagy is a selective form of autophagy necessary for mitochondrial quality control. The RNF41/NRDP1-PRKN pathway regulates autophagosome-lysosome fusion during late mitophagy. May protect RNF41/NRDP1 from proteasomal degradation, RNF41/NRDP1 which regulates proteasomal degradation of PRKN. Plays a key role in beta cells functions by regulating mitophagy/autophagy and mitochondrial health. This chain is Protein CLEC16A, found in Mus musculus (Mouse).